A 542-amino-acid chain; its full sequence is Chaperonin GroEL (542 aa).

ATP-binding positions include 29 to 32, 86 to 90, Gly-414, and Asp-491; these read TLGP and DGTTT.

It belongs to the chaperonin (HSP60) family. As to quaternary structure, forms a cylinder of 14 subunits composed of two heptameric rings stacked back-to-back. Interacts with the co-chaperonin GroES.

The protein resides in the cytoplasm. The catalysed reaction is ATP + H2O + a folded polypeptide = ADP + phosphate + an unfolded polypeptide.. Together with its co-chaperonin GroES, plays an essential role in assisting protein folding. The GroEL-GroES system forms a nano-cage that allows encapsulation of the non-native substrate proteins and provides a physical environment optimized to promote and accelerate protein folding. This Desulforamulus reducens (strain ATCC BAA-1160 / DSM 100696 / MI-1) (Desulfotomaculum reducens) protein is Chaperonin GroEL.